Reading from the N-terminus, the 323-residue chain is E3 ubiquitin-protein ligase makorin (323 aa).

C3H1-type zinc fingers lie at residues 1–28 (MSDR…HDSK) and 29–56 (DPPN…HVRA). The span at 62-74 (LSSDSESLDRSIS) shows a compositional bias: low complexity. The tract at residues 62-92 (LSSDSESLDRSISTTPSRHLQQQGDNNDGDK) is disordered. Residues 75-87 (TTPSRHLQQQGDN) are compositionally biased toward polar residues. The C3H1-type 3 zinc finger occupies 101 to 128 (PREYPICSFAAAGDCPRGNQCPHMHGDL). Residues 129–158 (CNTCGKKCLHPFRPEEREEHTKECEKKQKH) are makorin-type Cys-His. The RING-type zinc-finger motif lies at 170-228 (CSVCLDRILSKATPGERKFGLLTECDHPFCIQCIRNWRSSAPVSGMDVNSTLRACPICR). Residues 257–286 (KLRSIDCKHFNFGNGNCPFGASCFYKHAYS) form a C3H1-type 4 zinc finger.

It catalyses the reaction S-ubiquitinyl-[E2 ubiquitin-conjugating enzyme]-L-cysteine + [acceptor protein]-L-lysine = [E2 ubiquitin-conjugating enzyme]-L-cysteine + N(6)-ubiquitinyl-[acceptor protein]-L-lysine.. It participates in protein modification; protein ubiquitination. Its function is as follows. E3 ubiquitin ligase catalyzing the covalent attachment of ubiquitin moieties onto substrate proteins. This Arabidopsis thaliana (Mouse-ear cress) protein is E3 ubiquitin-protein ligase makorin (MKRN).